We begin with the raw amino-acid sequence, 102 residues long: Small ribosomal subunit protein uS10 (102 aa).

This sequence belongs to the universal ribosomal protein uS10 family. As to quaternary structure, part of the 30S ribosomal subunit.

Functionally, involved in the binding of tRNA to the ribosomes. The chain is Small ribosomal subunit protein uS10 from Listeria innocua serovar 6a (strain ATCC BAA-680 / CLIP 11262).